The chain runs to 101 residues: Integration host factor subunit beta (101 aa).

The protein belongs to the bacterial histone-like protein family. Heterodimer of an alpha and a beta chain.

Its function is as follows. This protein is one of the two subunits of integration host factor, a specific DNA-binding protein that functions in genetic recombination as well as in transcriptional and translational control. The protein is Integration host factor subunit beta of Maricaulis maris (strain MCS10) (Caulobacter maris).